Reading from the N-terminus, the 453-residue chain is Na(+)/H(+) antiporter NhaA (453 aa).

11 helical membrane passes run 28-48, 79-99, 115-135, 144-164, 173-193, 196-216, 241-261, 321-341, 355-375, 393-413, and 424-444; these read FLHI…AALI, LHFL…GMEI, ALPL…YFIL, GWAV…ALLG, VFLL…IAVF, GGMD…VLGM, TGAH…VFAP, VAFG…LDGI, VLIA…FLMV, LVGL…TLAF, and LGIL…GFFQ.

The protein belongs to the NhaA Na(+)/H(+) (TC 2.A.33) antiporter family.

It localises to the cell inner membrane. It carries out the reaction Na(+)(in) + 2 H(+)(out) = Na(+)(out) + 2 H(+)(in). Na(+)/H(+) antiporter that extrudes sodium in exchange for external protons. The chain is Na(+)/H(+) antiporter NhaA from Janthinobacterium sp. (strain Marseille) (Minibacterium massiliensis).